The following is a 418-amino-acid chain: MRVLVLGAGVVGTTSAWYLARAGHQVTVVDRQPVAGNETSFANGGQISVSHAEPWANPHVLPRVLKWLGREDAPLLWRWRADPAQLAWGLRFLGECFPGRVRRNIAAIVSMALYSRGRLQALREELGLQYDHLERGILHIYTDRDEFSAALDAARVMRQFGLDRDTVDVDKCLEIEPALSGARHLLVGGDYTRSDESGDANKFTCALAEHAKAAGVDFRYGLTVERIATSGSEIVGVLVQHSEGGPERLTADAYVVALGSYSPLLLRPIGVGLPVYPAKGYSATLTLAEASLAPTVSLTDDERKLVFSRLGNRLRIAGTAEFNGYNLELNPVRCQALIDRTRQLFPRLEIVGEPTLWCGLRPATPSNVPYIGQTRYRNLWLNTGHGTLGWTMACGSAASLAEMISGRRPEPEFPFLRC.

An FAD-binding site is contributed by 3 to 17 (VLVLGAGVVGTTSAW).

Belongs to the DadA oxidoreductase family. It depends on FAD as a cofactor.

The enzyme catalyses a D-alpha-amino acid + A + H2O = a 2-oxocarboxylate + AH2 + NH4(+). The protein operates within amino-acid degradation; D-alanine degradation; NH(3) and pyruvate from D-alanine: step 1/1. Oxidative deamination of D-amino acids. The chain is D-amino acid dehydrogenase from Dechloromonas aromatica (strain RCB).